Here is a 412-residue protein sequence, read N- to C-terminus: Angiopoietin-related protein 4 (412 aa).

An N-terminal signal peptide occupies residues 1-23 (MRSAPTARAALVLCAATAGLLSA). Positions 106 to 153 (ETLHSLQTQLKAQNSKIQQLFQKVAQQQRHLEKQHLRIQNLQGQLDHL) form a coiled coil. Residue N183 is glycosylated (N-linked (GlcNAc...) asparagine). In terms of domain architecture, Fibrinogen C-terminal spans 185 to 407 (SRLHRLPRDC…ATTMLIQPTV (223 aa)). 2 disulfide bridges follow: C194–C222 and C347–C360.

Homooligomer; disulfide-linked via Cys residues in the N-terminal part of the protein. The homooligomer undergoes proteolytic processing to release the ANGPTL4 C-terminal chain, which circulates as a monomer. The homooligomer unprocessed form is able to interact with the extracellular matrix. In terms of processing, N-glycosylated. Forms disulfide-linked dimers and tetramers. Post-translationally, cleaved into a smaller N-terminal chain and a larger chain that contains the fibrinogen C-terminal domain; both cleaved and uncleaved forms are detected in the extracellular space. The cleaved form is not present within the cell.

It is found in the secreted. The protein localises to the extracellular space. It localises to the extracellular matrix. Its function is as follows. Mediates inactivation of the lipoprotein lipase LPL, and thereby plays a role in the regulation of triglyceride clearance from the blood serum and in lipid metabolism. May also play a role in regulating glucose homeostasis and insulin sensitivity. Inhibits proliferation, migration, and tubule formation of endothelial cells and reduces vascular leakage. Upon heterologous expression, inhibits the adhesion of endothelial cell to the extracellular matrix (ECM), and inhibits the reorganization of the actin cytoskeleton, formation of actin stress fibers and focal adhesions in endothelial cells that have adhered to ANGPTL4-containing ECM (in vitro). Depending on context, may modulate tumor-related angiogenesis. Functionally, mediates inactivation of the lipoprotein lipase LPL, and thereby plays an important role in the regulation of triglyceride clearance from the blood serum and in lipid metabolism. Has higher activity in LPL inactivation than the uncleaved protein. The polypeptide is Angiopoietin-related protein 4 (ANGPTL4) (Sus scrofa (Pig)).